The sequence spans 2063 residues: Rho guanine nucleotide exchange factor 17 (2063 aa).

Disordered stretches follow at residues 22-365, 380-466, 485-581, and 602-958; these read WSGG…MSDS, YLAS…SNPD, LRVR…AEED, and IQRM…RHVR. A compositionally biased stretch (low complexity) spans 65–76; sequence PLAAPAQPRPLR. The segment covering 87–96 has biased composition (basic and acidic residues); sequence RRFDAPRLDD. Over residues 108–122 the composition is skewed to low complexity; it reads PAAAEEAAEGPARGA. Phosphoserine is present on residues serine 142 and serine 152. Positions 225–250 are enriched in low complexity; sequence AGARASCSSSSIAASYPVSRSRAASS. Residue serine 310 is modified to Phosphoserine. The segment covering 313–323 has biased composition (polar residues); it reads LNLSSMNSAGV. Serine 326, serine 332, serine 383, serine 387, serine 395, serine 410, and serine 420 each carry phosphoserine. Over residues 388–397 the composition is skewed to polar residues; sequence RGSSRYSSTE. A compositionally biased stretch (basic and acidic residues) spans 445–456; it reads ALRDGGFEPEKS. A phosphoserine mark is found at serine 461 and serine 546. Residues 562 to 573 show a composition bias toward low complexity; sequence SALKSSSSELLL. A Phosphoserine modification is found at serine 619. Over residues 671 to 680 the composition is skewed to polar residues; sequence LSSSSAQTNH. Serine 696 bears the Phosphoserine mark. A phosphothreonine mark is found at threonine 699 and threonine 702. Residue serine 735 is modified to Phosphoserine. Residues 754 to 765 are compositionally biased toward polar residues; it reads SVDSNLLGSLSP. Residues 827–836 are compositionally biased toward basic and acidic residues; it reads SLSDPSRRGE. At serine 914 the chain carries Phosphoserine. Residues 917 to 928 are compositionally biased toward basic residues; it reads LIRRGSKKRPAR. The segment covering 930–939 has biased composition (basic and acidic residues); it reads SHQELRRDEG. 2 positions are modified to phosphoserine: serine 961 and serine 1002. Positions 1034–1060 are disordered; that stretch reads APPSAEAKPPEAARPADEPTPASKCCS. The segment covering 1041-1050 has biased composition (basic and acidic residues); it reads KPPEAARPAD. The 189-residue stretch at 1066-1254 folds into the DH domain; that stretch reads MRKHVAMTLL…KQVAERINKG (189 aa). Phosphoserine is present on serine 1331. 4 disordered regions span residues 1564–1584, 1616–1719, 1991–2020, and 2036–2055; these read HREP…PAGP, GLEM…SSHG, TPPP…PAPA, and FRLS…DDST. Positions 1568–1582 are enriched in pro residues; sequence PPSLRSPPETAPEPA. Positions 1644–1680 are enriched in low complexity; the sequence is SPSPSGTLQSQASRSTISSSFGNEETPSSKEATAETT. The span at 2004–2013 shows a compositional bias: basic and acidic residues; it reads PSLEHRDSPW.

In terms of tissue distribution, highly expressed in the heart.

In terms of biological role, acts as a guanine nucleotide exchange factor (GEF) for RhoA GTPases. The sequence is that of Rho guanine nucleotide exchange factor 17 (ARHGEF17) from Homo sapiens (Human).